Reading from the N-terminus, the 53-residue chain is UPF0391 membrane protein Bmul_5473/BMULJ_06024 (53 aa).

Transmembrane regions (helical) follow at residues 5-25 (ALIF…GIAA) and 30-50 (IAKI…LLGV).

It belongs to the UPF0391 family.

The protein resides in the cell membrane. The sequence is that of UPF0391 membrane protein Bmul_5473/BMULJ_06024 from Burkholderia multivorans (strain ATCC 17616 / 249).